The following is a 336-amino-acid chain: NADH-cytochrome b5 reductase 2 (336 aa).

A helical membrane pass occupies residues 28-50; that stretch reads GGSSNGALYVGIGAAGLAGAYIY. The 106-residue stretch at 84–189 folds into the FAD-binding FR-type domain; the sequence is QGFISLLLDK…KGPIPKYPWS (106 aa). 192 to 227 is a binding site for FAD; sequence KHEHIALIAGGTGITPMWQTARAIFKNPEDKTKVTL.

Belongs to the flavoprotein pyridine nucleotide cytochrome reductase family. It depends on FAD as a cofactor.

It localises to the mitochondrion outer membrane. It carries out the reaction 2 Fe(III)-[cytochrome b5] + NADH = 2 Fe(II)-[cytochrome b5] + NAD(+) + H(+). Functionally, may mediate the reduction of outer membrane cytochrome b5. This chain is NADH-cytochrome b5 reductase 2 (MCR1), found in Phaeosphaeria nodorum (strain SN15 / ATCC MYA-4574 / FGSC 10173) (Glume blotch fungus).